Consider the following 611-residue polypeptide: MNQDVRVFPDSIYLSCSKKKASLRIDRVDGCLSLSNSLDLSKTPDYNNVQLYGFIRLKIYKYVVLVTSCDLHAAILGNNIYRARKFAIFPITRTLPFSTGLLNIKDEEELHYISLLNKHLSKGQILFSPTLDLTCSLQRLRVLTQSFELTSKYNYRFFWNKYAFHELIELTNKDLGFQEWIQPMIQGNIAITNSFLKTYNLRLCVITRHSPDYAGTRYFTRGVNAQGSAANFNEIEQIIMIESPITLEEQMVLSFTQIRGSIPMFWAEVNDLHYRPLLSLQPLDYSETVFGKHFQELANDYGDNLVVVNLLDQKGREAPLRSGFEKLCKRNKNPPLSYVYYDYHKQGSRNLPLFLAEIQSLLIEGKYYAEHGSKTTAMQTNFVRTNCMDCLDRTNVIQTSIAQFILNMQLHDIGVLSSSESLEEYDSFLQDFRLIWANTGDYISDLYTGTPALKGDVTRHGTRTIFGAFKDLLNCFRRYILNNFFDGMLQDSYDLGLGVFRPYDSLSIPDLPLRFHWTRFVAPGIFLFTTIILTIQELFGNPSLFCRLLYSIPMVNAGIYLYFHRRQYVNWPRLVLPTYAKGGWFSFRNHFRNITLKVFRFLRSGSFKKSV.

The SAC domain maps to 51 to 351 (LYGFIRLKIY…DYHKQGSRNL (301 aa)).

To yeast RSD1 and S.pombe SpBC19F5.03.

This is an uncharacterized protein from Schizosaccharomyces pombe (strain 972 / ATCC 24843) (Fission yeast).